The sequence spans 90 residues: RNA-binding protein Hfq (90 aa).

The Sm domain maps to 9-68 (DPFLNALRRERVPVSIYLVNGIKLQGQVESFDQFVILLKNTVSQMVYKHAISTVVPARPF).

It belongs to the Hfq family. Homohexamer.

RNA chaperone that binds small regulatory RNA (sRNAs) and mRNAs to facilitate mRNA translational regulation in response to envelope stress, environmental stress and changes in metabolite concentrations. Also binds with high specificity to tRNAs. The protein is RNA-binding protein Hfq of Shewanella baltica (strain OS155 / ATCC BAA-1091).